The following is a 636-amino-acid chain: Chaperone protein HtpG (636 aa).

An a; substrate-binding region spans residues 1–342; sequence MSSETLEFQA…AHDLSLNISR (342 aa). The tract at residues 343 to 558 is b; it reads ELLQQDRQIQ…AHDVTPTLEK (216 aa). The interval 559-636 is c; that stretch reads MYRAMGHEVP…ILAERLARTL (78 aa).

This sequence belongs to the heat shock protein 90 family. As to quaternary structure, homodimer.

It localises to the cytoplasm. Molecular chaperone. Has ATPase activity. The chain is Chaperone protein HtpG from Salinispora tropica (strain ATCC BAA-916 / DSM 44818 / JCM 13857 / NBRC 105044 / CNB-440).